The chain runs to 197 residues: Holliday junction branch migration complex subunit RuvA (197 aa).

Residues 1-64 (MYEYIKGKYI…EDFIGIYGFL (64 aa)) form a domain I region. Residues 65–143 (TKDELSMFKL…IDISEEDDEQ (79 aa)) are domain II. Residues 144 to 148 (IINKV) are flexible linker. The tract at residues 149–197 (TDDKKVLEAVAALVTLGYSEKEASKVINLCDKNNSLEQIIKEALKHLMK) is domain III.

This sequence belongs to the RuvA family. In terms of assembly, homotetramer. Forms an RuvA(8)-RuvB(12)-Holliday junction (HJ) complex. HJ DNA is sandwiched between 2 RuvA tetramers; dsDNA enters through RuvA and exits via RuvB. An RuvB hexamer assembles on each DNA strand where it exits the tetramer. Each RuvB hexamer is contacted by two RuvA subunits (via domain III) on 2 adjacent RuvB subunits; this complex drives branch migration. In the full resolvosome a probable DNA-RuvA(4)-RuvB(12)-RuvC(2) complex forms which resolves the HJ.

Its subcellular location is the cytoplasm. In terms of biological role, the RuvA-RuvB-RuvC complex processes Holliday junction (HJ) DNA during genetic recombination and DNA repair, while the RuvA-RuvB complex plays an important role in the rescue of blocked DNA replication forks via replication fork reversal (RFR). RuvA specifically binds to HJ cruciform DNA, conferring on it an open structure. The RuvB hexamer acts as an ATP-dependent pump, pulling dsDNA into and through the RuvAB complex. HJ branch migration allows RuvC to scan DNA until it finds its consensus sequence, where it cleaves and resolves the cruciform DNA. The sequence is that of Holliday junction branch migration complex subunit RuvA from Clostridium botulinum (strain Loch Maree / Type A3).